Reading from the N-terminus, the 105-residue chain is Translation initiation factor 1A (105 aa).

Residues 18 to 92 (IRVKLPNKRI…DKCDIIYRYT (75 aa)) form the S1-like domain.

This sequence belongs to the eIF-1A family.

Seems to be required for maximal rate of protein biosynthesis. Enhances ribosome dissociation into subunits and stabilizes the binding of the initiator Met-tRNA(I) to 40 S ribosomal subunits. The chain is Translation initiation factor 1A (eIF1A) from Methanocorpusculum labreanum (strain ATCC 43576 / DSM 4855 / Z).